A 119-amino-acid polypeptide reads, in one-letter code: Large ribosomal subunit protein bL20 (119 aa).

It belongs to the bacterial ribosomal protein bL20 family.

Binds directly to 23S ribosomal RNA and is necessary for the in vitro assembly process of the 50S ribosomal subunit. It is not involved in the protein synthesizing functions of that subunit. The protein is Large ribosomal subunit protein bL20 of Caldicellulosiruptor bescii (strain ATCC BAA-1888 / DSM 6725 / KCTC 15123 / Z-1320) (Anaerocellum thermophilum).